A 33-amino-acid polypeptide reads, in one-letter code: Non-specific lipid-transfer protein (33 aa).

The cysteines at positions 14 and 29 are disulfide-linked.

It belongs to the plant LTP family. Dimer.

Its function is as follows. Plant non-specific lipid-transfer proteins transfer phospholipids as well as galactolipids across membranes. May play a role in wax or cutin deposition in the cell walls of expanding epidermal cells and certain secretory tissues. Has antibacterial activity against Gram-positive bacteria S.aureus and S.epidermidis and blocks biofilm formation. In a mouse model, also protects against bacterial sepsis and has an anti-inflammatory effect. Exhibits antinociceptive activity upon oral or intraperitoneal application in mice. This Morinda citrifolia (Indian mulberry) protein is Non-specific lipid-transfer protein.